Consider the following 908-residue polypeptide: Serine/threonine-protein kinase WARTS homolog (908 aa).

Positions 42-70 form a coiled coil; the sequence is EIRVGRHRAKLDEIRESLKAYEHEAGLLS. 2 stretches are compositionally biased toward low complexity: residues 115-125 and 168-181; these read VSSAAVSNSNS and PSTT…TTTE. Disordered stretches follow at residues 115 to 134, 162 to 183, 203 to 225, and 388 to 412; these read VSSA…GGHK, MIRN…TEES, NNNA…DSSP, and KSRA…VSSP. Positions 392-404 are enriched in pro residues; sequence QPPPPQYNQPSEP. Residues 439–470 are a coiled coil; sequence YMEQHVERLLQQYKEREKRMKQLEKEMVSAQL. The 306-residue stretch at 502-807 folds into the Protein kinase domain; sequence FTVISHIGVG…TAQVKNHPWF (306 aa). ATP-binding positions include 508–516 and Lys-531; that span reads IGVGAFGKV. Asp-625 (proton acceptor) is an active-site residue. Residues 808–874 enclose the AGC-kinase C-terminal domain; the sequence is RGIDWVNLRK…RHFFDTDSVG (67 aa).

Belongs to the protein kinase superfamily. AGC Ser/Thr protein kinase family. As to quaternary structure, interacts (via N-terminus) with yap-1 (via WW domain). The cofactor is Mg(2+). As to expression, expressed in muscles and epithelial tissues including pharynx, intestine and hypodermis. Expressed in vulval and spermathecal seam cells.

It is found in the cytoplasm. The protein localises to the apical cell membrane. It catalyses the reaction L-seryl-[protein] + ATP = O-phospho-L-seryl-[protein] + ADP + H(+). The catalysed reaction is L-threonyl-[protein] + ATP = O-phospho-L-threonyl-[protein] + ADP + H(+). In terms of biological role, phosphorylates yap-1 which may negatively regulate yap-1 nuclear localization. Plays an essential role in larval development. Regulates growth, the formation of gut granules, lifespan and cell and body sizes probably in synergy with the TGF-beta sma/mab pathway. Does not appear to regulate apoptosis and proliferation. In addition, may synergize with the TGF-beta daf-7 dauer pathway to regulate entry into the dauer stage. Maintains the cellular integrity of intestinal cells by regulating the localization of apical actin and junctional proteins. The polypeptide is Serine/threonine-protein kinase WARTS homolog (Caenorhabditis elegans).